The following is a 299-amino-acid chain: Probable lipid kinase YegS (299 aa).

Residues 2 to 133 (ANFPASLLIL…IDMAMVNDKT (132 aa)) form the DAGKc domain. ATP contacts are provided by residues Thr40, 66 to 72 (GDGTINE), and Thr95. Positions 215, 218, and 220 each coordinate Mg(2+). Glu271 serves as the catalytic Proton acceptor.

Belongs to the diacylglycerol/lipid kinase family. YegS lipid kinase subfamily. It depends on Mg(2+) as a cofactor. Requires Ca(2+) as cofactor.

Its subcellular location is the cytoplasm. Probably phosphorylates lipids; the in vivo substrate is unknown. The sequence is that of Probable lipid kinase YegS from Salmonella choleraesuis (strain SC-B67).